The sequence spans 292 residues: Formamidopyrimidine-DNA glycosylase (292 aa).

The active-site Schiff-base intermediate with DNA is the P2. The active-site Proton donor is E3. The Proton donor; for beta-elimination activity role is filled by K61. Residues H103, R122, and K168 each coordinate DNA. The FPG-type zinc-finger motif lies at 254 to 288 (DAYGREGEHCRRCGAVMRREKFMNRSSFYCPRCQP). Catalysis depends on R278, which acts as the Proton donor; for delta-elimination activity.

The protein belongs to the FPG family. As to quaternary structure, monomer. It depends on Zn(2+) as a cofactor.

It carries out the reaction Hydrolysis of DNA containing ring-opened 7-methylguanine residues, releasing 2,6-diamino-4-hydroxy-5-(N-methyl)formamidopyrimidine.. It catalyses the reaction 2'-deoxyribonucleotide-(2'-deoxyribose 5'-phosphate)-2'-deoxyribonucleotide-DNA = a 3'-end 2'-deoxyribonucleotide-(2,3-dehydro-2,3-deoxyribose 5'-phosphate)-DNA + a 5'-end 5'-phospho-2'-deoxyribonucleoside-DNA + H(+). In terms of biological role, involved in base excision repair of DNA damaged by oxidation or by mutagenic agents. Acts as a DNA glycosylase that recognizes and removes damaged bases. Has a preference for oxidized purines, such as 7,8-dihydro-8-oxoguanine (8-oxoG). Has AP (apurinic/apyrimidinic) lyase activity and introduces nicks in the DNA strand. Cleaves the DNA backbone by beta-delta elimination to generate a single-strand break at the site of the removed base with both 3'- and 5'-phosphates. In Mycobacterium ulcerans (strain Agy99), this protein is Formamidopyrimidine-DNA glycosylase.